The sequence spans 346 residues: MSVTPNPDQHVAQLIDANLDRAREGLRVIEDWCRFSLKNKDMVITLKNWRQQLGKEHYEIYKNARSSSSDQSAGLSHPAQKERILPQQILSANFARIQEALRVIEEFSRISHPKLSKISAQIRYEIYDLEVIILKISNLNMLDEKLKSCKLCLITRTHPELIKTVLLALKAGVTMIQYRCKETPDNQMIAEAKELASICKSYNSLFLINDRADIALAVDADGVHLGQKDMPIQTARKIIGHQKIIGLSTHSLEEIQNATSQGCNYIGIGPIFKTKSKQNDLSLGIDFFSKINLKTNLPWFAIGGINKDNIDKIKEVGIKRVAVINAIMGAEDPYLASKELLGKLKK.

The interval Met1–Glu125 is unknown. The thiamine-phosphate synthase stretch occupies residues Ile126–Lys346. 4-amino-2-methyl-5-(diphosphooxymethyl)pyrimidine contacts are provided by residues Gln177–Lys181 and Asn209. Mg(2+)-binding residues include Asp210 and Asp229. Ser248 provides a ligand contact to 4-amino-2-methyl-5-(diphosphooxymethyl)pyrimidine. Thr274–Ser276 serves as a coordination point for 2-[(2R,5Z)-2-carboxy-4-methylthiazol-5(2H)-ylidene]ethyl phosphate. Residue Lys277 participates in 4-amino-2-methyl-5-(diphosphooxymethyl)pyrimidine binding. Gly304 serves as a coordination point for 2-[(2R,5Z)-2-carboxy-4-methylthiazol-5(2H)-ylidene]ethyl phosphate.

The protein belongs to the thiamine-phosphate synthase family. Mg(2+) is required as a cofactor.

It catalyses the reaction 2-[(2R,5Z)-2-carboxy-4-methylthiazol-5(2H)-ylidene]ethyl phosphate + 4-amino-2-methyl-5-(diphosphooxymethyl)pyrimidine + 2 H(+) = thiamine phosphate + CO2 + diphosphate. The enzyme catalyses 2-(2-carboxy-4-methylthiazol-5-yl)ethyl phosphate + 4-amino-2-methyl-5-(diphosphooxymethyl)pyrimidine + 2 H(+) = thiamine phosphate + CO2 + diphosphate. The catalysed reaction is 4-methyl-5-(2-phosphooxyethyl)-thiazole + 4-amino-2-methyl-5-(diphosphooxymethyl)pyrimidine + H(+) = thiamine phosphate + diphosphate. It participates in cofactor biosynthesis; thiamine diphosphate biosynthesis; thiamine phosphate from 4-amino-2-methyl-5-diphosphomethylpyrimidine and 4-methyl-5-(2-phosphoethyl)-thiazole: step 1/1. Functionally, condenses 4-methyl-5-(beta-hydroxyethyl)thiazole monophosphate (THZ-P) and 2-methyl-4-amino-5-hydroxymethyl pyrimidine pyrophosphate (HMP-PP) to form thiamine monophosphate (TMP). The sequence is that of Thiamine-phosphate synthase from Prochlorococcus marinus (strain SARG / CCMP1375 / SS120).